A 702-amino-acid chain; its full sequence is Phosphoglycerol transferase I (702 aa).

3 helical membrane-spanning segments follow: residues 2-22 (HWMLLVSLLLLLWLLVASPRL), 71-91 (FSGYIAVFVGMLLLSLSPLLL), and 103-123 (GGAVFAGFVGMLLVGIAASPL).

Belongs to the OpgB family.

The protein resides in the cell inner membrane. The enzyme catalyses a phosphatidylglycerol + a membrane-derived-oligosaccharide D-glucose = a 1,2-diacyl-sn-glycerol + a membrane-derived-oligosaccharide 6-(glycerophospho)-D-glucose.. Its pathway is glycan metabolism; osmoregulated periplasmic glucan (OPG) biosynthesis. In terms of biological role, transfers a phosphoglycerol residue from phosphatidylglycerol to the membrane-bound nascent glucan backbones. This chain is Phosphoglycerol transferase I, found in Xanthomonas euvesicatoria pv. vesicatoria (strain 85-10) (Xanthomonas campestris pv. vesicatoria).